A 434-amino-acid chain; its full sequence is Gamma-glutamyl phosphate reductase (434 aa).

Positions 1 to 11 (MTNSNEAQENA) are enriched in polar residues. Residues 1 to 26 (MTNSNEAQENALSPERQAERDEVLAK) form a disordered region. The span at 16–25 (RQAERDEVLA) shows a compositional bias: basic and acidic residues.

The protein belongs to the gamma-glutamyl phosphate reductase family.

The protein localises to the cytoplasm. It carries out the reaction L-glutamate 5-semialdehyde + phosphate + NADP(+) = L-glutamyl 5-phosphate + NADPH + H(+). It functions in the pathway amino-acid biosynthesis; L-proline biosynthesis; L-glutamate 5-semialdehyde from L-glutamate: step 2/2. Functionally, catalyzes the NADPH-dependent reduction of L-glutamate 5-phosphate into L-glutamate 5-semialdehyde and phosphate. The product spontaneously undergoes cyclization to form 1-pyrroline-5-carboxylate. This is Gamma-glutamyl phosphate reductase from Corynebacterium jeikeium (strain K411).